Here is a 210-residue protein sequence, read N- to C-terminus: Large ribosomal subunit protein uL3 (210 aa).

Positions 134 to 153 (THGNSLSHRAPGSIGQNQTP) are disordered. N5-methylglutamine is present on glutamine 151.

This sequence belongs to the universal ribosomal protein uL3 family. In terms of assembly, part of the 50S ribosomal subunit. Forms a cluster with proteins L14 and L19. In terms of processing, methylated by PrmB.

In terms of biological role, one of the primary rRNA binding proteins, it binds directly near the 3'-end of the 23S rRNA, where it nucleates assembly of the 50S subunit. In Aeromonas salmonicida (strain A449), this protein is Large ribosomal subunit protein uL3.